Consider the following 2896-residue polypeptide: Protein PRRC2C (2896 aa).

An N6-acetyllysine modification is found at Lys27. Positions 28 to 212 (GKSLETQKTT…STAGTSEQND (185 aa)) are disordered. The segment covering 88-97 (QEQHEEEKTP) has biased composition (basic and acidic residues). Positions 105–119 (KPGVAAPPEVAPAPK) are enriched in low complexity. The span at 134-144 (QVNSQFQQEFP) shows a compositional bias: polar residues. A compositionally biased stretch (basic and acidic residues) spans 151–160 (DQEKKEKETN). Phosphoserine is present on residues Ser187 and Ser191. The span at 201–211 (DESTAGTSEQN) shows a compositional bias: polar residues. Arg242 is modified (asymmetric dimethylarginine; alternate). Residue Arg242 is modified to Omega-N-methylarginine; alternate. Residues Arg255 and Arg266 each carry the asymmetric dimethylarginine modification. 2 disordered regions span residues 264–729 (PMRF…QHLA) and 750–788 (SGRP…SFEH). An omega-N-methylarginine mark is found at Arg279 and Arg281. Positions 301 to 310 (ELKELDKFDN) are enriched in basic and acidic residues. Ser335 bears the Phosphoserine mark. A compositionally biased stretch (polar residues) spans 341-358 (GSNSPKENNSEDQGSKAS). Positions 359–368 (ENNENKKETD) are enriched in basic and acidic residues. Over residues 370–381 (VSNTKSSSQIPA) the composition is skewed to polar residues. The residue at position 392 (Lys392) is an N6-acetyllysine. Residues Ser395 and Ser500 each carry the phosphoserine modification. Positions 395 to 405 (SFNQERGTSSH) are enriched in polar residues. Residues 465–648 (RREEEERRME…EATPVVHETE (184 aa)) show a composition bias toward basic and acidic residues. The segment covering 676 to 708 (QRQQEQMKQQQWQQQQQQGVLPQTVPSQPSSST) has biased composition (low complexity). The segment covering 759–769 (PIHPGMIPPKP) has biased composition (pro residues). Phosphoserine is present on residues Ser779, Ser785, and Ser801. The tract at residues 804 to 1118 (RMLWGSDPYP…PVSTVQVEPA (315 aa)) is disordered. Composition is skewed to basic and acidic residues over residues 825-836 (ATEEPEDVRSEA), 852-867 (NQLE…RESS), and 878-888 (SVEDVRPHHTD). A phosphoserine mark is found at Ser867, Ser878, Ser920, and Ser929. 3 stretches are compositionally biased toward basic and acidic residues: residues 954–993 (IDSK…ETRW), 1000–1010 (NRREEVNDRPV), and 1020–1058 (VLRD…KKDL). The stretch at 1020–1046 (VLRDMKEEREQRKEKEGEKAEKVTEKV) forms a coiled coil. Over residues 1059–1081 (PPPPPPPQPPAPIQPQSVPPPIQ) the composition is skewed to pro residues. The span at 1089–1100 (STETATLAQKPS) shows a compositional bias: polar residues. Lys1133 is covalently cross-linked (Glycyl lysine isopeptide (Lys-Gly) (interchain with G-Cter in SUMO2)). Basic and acidic residues-rich tracts occupy residues 1143–1163 (SKDL…KKES), 1170–1180 (YWKEARERDWF), 1214–1230 (HTRD…RAEH), and 1237–1248 (RQREESETRSES). Disordered stretches follow at residues 1143–1647 (SKDL…DALS), 1670–1785 (EDPQ…SAPV), 1905–1991 (APAS…TAEL), 2005–2164 (ISKK…VSEM), 2218–2238 (LPNT…SLTS), 2257–2290 (WENS…GPST), 2317–2341 (GAGT…NICK), and 2668–2701 (DIKP…QSSK). A phosphoserine mark is found at Ser1242, Ser1246, Ser1248, Ser1249, and Ser1263. 4 stretches are compositionally biased toward basic and acidic residues: residues 1261 to 1297 (RGSE…ENKK), 1305 to 1330 (FKPD…DKAK), 1381 to 1418 (EVPK…PARE), and 1429 to 1446 (PRQD…REAA). Phosphothreonine occurs at positions 1265 and 1267. 2 stretches are compositionally biased toward polar residues: residues 1457–1469 (TNGT…QEPV) and 1477–1491 (GNKT…SSDQ). A compositionally biased stretch (basic and acidic residues) spans 1505–1517 (FNERRERDEKKNA). Phosphoserine is present on Ser1544. 2 stretches are compositionally biased toward basic and acidic residues: residues 1620-1634 (NSKD…DPKP) and 1692-1704 (RLQD…KEEQ). Residues 1682–1717 (TEVVSKKQQKRLQDEERRKKEEQVIQVWNKKNANEK) adopt a coiled-coil conformation. The segment covering 1742–1785 (SSASVPPLASAPLPPSTSASVPASTSAPLPATLTPVPASTSAPV) has biased composition (low complexity). Over residues 1913–1929 (APAPTPVSAPNPAPPAP) the composition is skewed to pro residues. Over residues 1943–1952 (PLQTTSQSSK) the composition is skewed to low complexity. Thr1965 is subject to Phosphothreonine. Residues 1976–1986 (KSIQTPQSHGT) are compositionally biased toward polar residues. A phosphoserine mark is found at Ser1983 and Ser2013. Over residues 2019–2035 (SVSAWNKPLTSFGSAPS) the composition is skewed to polar residues. Residues 2075–2088 (KSADKIPEPKEQRQ) show a composition bias toward basic and acidic residues. Ser2105 is subject to Phosphoserine. Positions 2108–2132 (ENKEHKPGPIGKERSLKNRKVKDAQ) are enriched in basic and acidic residues. Ser2143 carries the post-translational modification Phosphoserine. Residues 2257 to 2267 (WENSPNVREKG) are compositionally biased toward basic and acidic residues. The residue at position 2260 (Ser2260) is a Phosphoserine. Over residues 2269-2290 (PVTSTAPPIATGVSSSASGPST) the composition is skewed to polar residues. The segment covering 2320–2334 (TYTTSSLSTKSTTTS) has biased composition (low complexity). Phosphothreonine is present on residues Thr2673 and Thr2682. Over residues 2679 to 2701 (RSTTPTSSPFRATSTSPNSQSSK) the composition is skewed to polar residues. Phosphoserine is present on residues Ser2686 and Ser2694. Arg2814 is modified (omega-N-methylarginine). Arg2823 bears the Asymmetric dimethylarginine; alternate mark. Arg2823 carries the post-translational modification Omega-N-methylarginine; alternate. Residues 2824–2833 (FFSEQQQSKQ) are compositionally biased toward polar residues. The interval 2824 to 2896 (FFSEQQQSKQ…QAIKTEETKS (73 aa)) is disordered.

In terms of tissue distribution, overexpressed in bladder cancer.

Its subcellular location is the cytoplasm. The protein localises to the stress granule. Functionally, required for efficient formation of stress granules. In Homo sapiens (Human), this protein is Protein PRRC2C.